Reading from the N-terminus, the 596-residue chain is Neuroepithelial cell-transforming gene 1 protein (596 aa).

Position 1 is an N-acetylmethionine (methionine 1). A disordered region spans residues 1–44 (MEPELAAQKQPRPRRRSRRASGLSTEGATGPSADTSGSELDGRC). The segment at 1 to 74 (MEPELAAQKQ…LKRKRREKDD (74 aa)) is necessary for nuclear localization. The Nuclear localization signal signature appears at 12-19 (RPRRRSRR). 2 positions are modified to phosphoserine: serine 21 and serine 32. Residues 22-38 (GLSTEGATGPSADTSGS) show a composition bias toward polar residues. Residues 66–72 (KRKRREK) carry the Nuclear localization signal motif. 3 positions are modified to phosphoserine: serine 100, serine 106, and serine 122. Residues 127–146 (GDHRSPASAQKFSSRSTVPT) are disordered. Polar residues predominate over residues 133–145 (ASAQKFSSRSTVP). The 183-residue stretch at 174 to 356 (RRQEAIYEMS…QGVLSDINLK (183 aa)) folds into the DH domain. Residues 386–501 (VLLCHGELRS…WFNCIRAAIA (116 aa)) form the PH domain. Serine 508 carries the phosphoserine modification. Residues 562–596 (MAEDSKSLKTHQTQPGIRRARDKALSGGKRKETLV) form a disordered region.

Interacts with RHOA in its GTP- and GDP-bound states, and with CDC42 in its GTP-bound state. Interacts with the PDZ 1 domain of BAIAP1. Widely expressed.

The protein localises to the cytoplasm. It is found in the nucleus. In terms of biological role, acts as a guanine nucleotide exchange factor (GEF) for RhoA GTPase. May be involved in activation of the SAPK/JNK pathway Stimulates genotoxic stress-induced RHOB activity in breast cancer cells leading to their cell death. In Homo sapiens (Human), this protein is Neuroepithelial cell-transforming gene 1 protein (NET1).